The chain runs to 875 residues: Leucine--tRNA ligase (875 aa).

A 'HIGH' region motif is present at residues 43 to 53 (PYPSGRIHIGH). The short motif at 631–635 (KMSKS) is the 'KMSKS' region element. Lys-634 provides a ligand contact to ATP.

This sequence belongs to the class-I aminoacyl-tRNA synthetase family.

It localises to the cytoplasm. The enzyme catalyses tRNA(Leu) + L-leucine + ATP = L-leucyl-tRNA(Leu) + AMP + diphosphate. In Mesorhizobium japonicum (strain LMG 29417 / CECT 9101 / MAFF 303099) (Mesorhizobium loti (strain MAFF 303099)), this protein is Leucine--tRNA ligase.